The following is a 391-amino-acid chain: Phosphoprotein (391 aa).

2 positions are modified to phosphothreonine: threonine 10 and threonine 16. Over residues 54 to 65 the composition is skewed to polar residues; it reads QKNIQHPTASHQ. Disordered regions lie at residues 54–98 and 145–186; these read QKNI…EPLF and TSTP…RSGS. Phosphoserine is present on serine 69. Threonine 91, threonine 150, and threonine 165 each carry phosphothreonine. Phosphoserine is present on serine 188. The stretch at 218–245 forms a coiled coil; that stretch reads ANEIMDLLRGMDARLQHLEQKVDKVLAQ. Phosphothreonine is present on threonine 250. Serine 257 carries the post-translational modification Phosphoserine. 2 positions are modified to phosphothreonine: threonine 258 and threonine 282. 2 positions are modified to phosphoserine: serine 292 and serine 294. Phosphothreonine is present on threonine 298. 2 positions are modified to phosphoserine: serine 301 and serine 374. The interval 343–391 is interaction with the nucleoprotein; it reads AGRKVMITKMITDCVANPQMKQAFEQRLAKASTEDALNDIKRDIIRNAI. Threonine 375 carries the post-translational modification Phosphothreonine.

The protein belongs to the rubulavirus/avulavirus P protein family. In terms of assembly, homotetramer. Interacts (via multimerization domain) with polymerase L; this interaction forms the polymerase L-P complex. Interacts (via N-terminus) with N0 (via Ncore); this interaction allows P to chaperon N0 to avoid N polymerization before encapsidation. Interacts (via C-terminus) with N-RNA template; this interaction positions the polymerase on the template for both transcription and replication. Interacts with host RPS6KB1 kinase; this interaction may play a role in the viral replication and transcription.

The protein resides in the virion. Essential cofactor of the RNA polymerase L that plays a central role in the transcription and replication by forming the polymerase complex with RNA polymerase L and recruiting L to the genomic N-RNA template for RNA synthesis. Also plays a central role in the encapsidation of nascent RNA chains by forming the encapsidation complex with the nucleocapsid protein N (N-P complex). Acts as a chaperone for newly synthesized free N protein, so-called N0, allowing encapsidation of nascent RNA chains during replication. The nucleoprotein protein N prevents excessive phosphorylation of P, which leads to down-regulation of viral transcription/ replication. Participates, together with N, in the formation of viral factories (viroplasms), which are large inclusions in the host cytoplasm where replication takes place. The protein is Phosphoprotein of Mumps virus genotype N (strain L-Zagreb vaccine) (MuV).